We begin with the raw amino-acid sequence, 322 residues long: Methionyl-tRNA formyltransferase (322 aa).

115 to 118 contributes to the (6S)-5,6,7,8-tetrahydrofolate binding site; it reads SLLP.

Belongs to the Fmt family.

The catalysed reaction is L-methionyl-tRNA(fMet) + (6R)-10-formyltetrahydrofolate = N-formyl-L-methionyl-tRNA(fMet) + (6S)-5,6,7,8-tetrahydrofolate + H(+). Attaches a formyl group to the free amino group of methionyl-tRNA(fMet). The formyl group appears to play a dual role in the initiator identity of N-formylmethionyl-tRNA by promoting its recognition by IF2 and preventing the misappropriation of this tRNA by the elongation apparatus. The chain is Methionyl-tRNA formyltransferase from Treponema denticola (strain ATCC 35405 / DSM 14222 / CIP 103919 / JCM 8153 / KCTC 15104).